Here is a 270-residue protein sequence, read N- to C-terminus: F-actin-capping protein subunit beta (270 aa).

The protein belongs to the F-actin-capping protein beta subunit family. Component of the F-actin capping complex, composed of a heterodimer of an alpha and a beta subunit.

It is found in the cytoplasm. The protein localises to the cytoskeleton. In terms of biological role, F-actin-capping proteins bind in a Ca(2+)-independent manner to the fast growing ends of actin filaments (barbed end) thereby blocking the exchange of subunits at these ends. Unlike other capping proteins (such as gelsolin and severin), these proteins do not sever actin filaments. This chain is F-actin-capping protein subunit beta (cap-2), found in Caenorhabditis elegans.